Here is a 327-residue protein sequence, read N- to C-terminus: CREB homolog crh-1 (327 aa).

One can recognise a KID domain in the interval 16 to 75; that stretch reads SPLMMLLFKALQEGGDSEDEARRRREQLNRRPSYRMILKDLETADKVMKKEPEETPPSSV. Disordered regions lie at residues 27–114 and 151–200; these read QEGG…SPYG and KVFP…VQSL. Basic and acidic residues predominate over residues 35–44; sequence EARRRREQLN. Position 48 is a phosphoserine (Ser-48). The span at 52-68 shows a compositional bias: basic and acidic residues; sequence ILKDLETADKVMKKEPE. Polar residues predominate over residues 71–84; sequence PPSSVDASPLQFQS. Residues 161–172 show a composition bias toward gly residues; that stretch reads GLGGGGGGGGVP. Residues 173–199 show a composition bias toward low complexity; sequence GPSSGIAGMSVQPPTSSTPSQQQSVQS. The region spanning 266–317 is the bZIP domain; sequence NRKRQVRLLKNREAAKECRRKKKEYVKCLENRVSVLENQNKALIEELKTLKE. A basic motif region spans residues 267–292; the sequence is RKRQVRLLKNREAAKECRRKKKEYVK. Residues 284–318 adopt a coiled-coil conformation; sequence RRKKKEYVKCLENRVSVLENQNKALIEELKTLKEL. Residues 294–315 form a leucine-zipper region; it reads LENRVSVLENQNKALIEELKTL.

The protein belongs to the bZIP family. Interacts with CREB-regulated transcription coactivator homolog crtc-1. Post-translationally, transcriptional activity is enhanced by phosphorylation. Phosphorylated by cmk-1. Expressed widely, including in head neurons AFD, gustatory neurons ASE, the olfactory neurons AWC, and in the ASI sensory neurons, as well as in the intestine and gonads in hermaphrodites.

It is found in the nucleus. Functionally, transcription factor. Transcriptional activity probably positively regulated by phosphorylation. Modulates expression of target genes, acting by binding to regulatory cAMP response elements (CRE). Acts downstream of the calcium-triggered CaMKK-CaMK1 signaling cascade, consisting of the protein kinase kinase ckk-1 and the protein kinase cmk-1. Plays a role in learning and memory, feeding behavior, stress response, entry into the dauer stage and modulation of lifespan. Involved in commitment to the developmentally arrested larval state known as dauer, acting by positively regulating the expression of dauer-inhibiting TGF-beta-like daf-7 in the ASI neurons. Plays a role in both associative and non-associative long-term memory (LTM). Involved in modulating feeding behavior, acting by regulating transcription of tryptophan hydroxylase tph-1 in serotonergic ADF neurons. Regulates transcription of genes involved in endoplasmic reticulum (ER) stress. Involved in modulation of lifespan, in response to raised temperature, but independently of the heat-shock response pathway, acting by regulating transcription of FMRFamide-like neuropeptides flp-6 in the AFD neuron. Its function is as follows. Plays a role in associative long-term memory (LTM) and learning. In terms of biological role, plays a role in associative long-term memory (LTM) and learning; perhaps required at the time of acquisition and/or the consolidation phase of memory formation. The chain is CREB homolog crh-1 from Caenorhabditis elegans.